Reading from the N-terminus, the 106-residue chain is UPF0145 protein Pfl01_1745 (106 aa).

This sequence belongs to the UPF0145 family.

The chain is UPF0145 protein Pfl01_1745 from Pseudomonas fluorescens (strain Pf0-1).